We begin with the raw amino-acid sequence, 162 residues long: NADH-quinone oxidoreductase subunit I (162 aa).

2 consecutive 4Fe-4S ferredoxin-type domains span residues 53 to 83 and 93 to 122; these read QRRY…IESE and SRYD…ETHI. Residues C63, C66, C69, C73, C102, C105, C108, and C112 each coordinate [4Fe-4S] cluster.

It belongs to the complex I 23 kDa subunit family. In terms of assembly, NDH-1 is composed of 14 different subunits. Subunits NuoA, H, J, K, L, M, N constitute the membrane sector of the complex. [4Fe-4S] cluster serves as cofactor.

It is found in the cell inner membrane. The catalysed reaction is a quinone + NADH + 5 H(+)(in) = a quinol + NAD(+) + 4 H(+)(out). NDH-1 shuttles electrons from NADH, via FMN and iron-sulfur (Fe-S) centers, to quinones in the respiratory chain. The immediate electron acceptor for the enzyme in this species is believed to be ubiquinone. Couples the redox reaction to proton translocation (for every two electrons transferred, four hydrogen ions are translocated across the cytoplasmic membrane), and thus conserves the redox energy in a proton gradient. The polypeptide is NADH-quinone oxidoreductase subunit I (Chromobacterium violaceum (strain ATCC 12472 / DSM 30191 / JCM 1249 / CCUG 213 / NBRC 12614 / NCIMB 9131 / NCTC 9757 / MK)).